An 863-amino-acid chain; its full sequence is Alanine--tRNA ligase (863 aa).

Positions 552, 556, 654, and 658 each coordinate Zn(2+).

It belongs to the class-II aminoacyl-tRNA synthetase family. Zn(2+) serves as cofactor.

It is found in the cytoplasm. It catalyses the reaction tRNA(Ala) + L-alanine + ATP = L-alanyl-tRNA(Ala) + AMP + diphosphate. Catalyzes the attachment of alanine to tRNA(Ala) in a two-step reaction: alanine is first activated by ATP to form Ala-AMP and then transferred to the acceptor end of tRNA(Ala). Also edits incorrectly charged Ser-tRNA(Ala) and Gly-tRNA(Ala) via its editing domain. This chain is Alanine--tRNA ligase, found in Nitrosomonas eutropha (strain DSM 101675 / C91 / Nm57).